The sequence spans 181 residues: uncharacterized protein (181 aa).

At 1-14 (MQKCIMRSTEFKTH) the chain is on the cytoplasmic side. The chain crosses the membrane as a helical span at residues 15–35 (FSFHSIFSFPLSAALLALISA). The Extracellular portion of the chain corresponds to 36–58 (SEPASKAFINVQFISSPLVKKEV). A helical membrane pass occupies residues 59–79 (LPFIVSFHSLSSNGILSFSPF). Over 80–84 (TSSNL) the chain is Cytoplasmic. Residues 85 to 105 (SIAQLPFLIKVPLLSMGSLAL) traverse the membrane as a helical segment. Topologically, residues 106–116 (ENFNKFIPRAD) are extracellular. A helical membrane pass occupies residues 117–137 (LVAAWVTIIMVFTFGNFLSTL). Topologically, residues 138–153 (SIKTGQNLWHLSKISS) are cytoplasmic. Residues 154–174 (SVSPLLLGIILGSQSGEIMLG) form a helical membrane-spanning segment. The Extracellular segment spans residues 175-181 (KNLLITS).

It localises to the membrane. This is an uncharacterized protein from Saccharomyces cerevisiae (strain ATCC 204508 / S288c) (Baker's yeast).